A 239-amino-acid chain; its full sequence is Ribosomal RNA small subunit methyltransferase G (239 aa).

Residues Gly77, Phe82, 128–129, and Arg146 each bind S-adenosyl-L-methionine; that span reads AE. The segment at 217–239 is disordered; sequence RRQTSKKYPRKPGTPNKSPLVES.

It belongs to the methyltransferase superfamily. RNA methyltransferase RsmG family.

The protein resides in the cytoplasm. Specifically methylates the N7 position of guanine in position 535 of 16S rRNA. The chain is Ribosomal RNA small subunit methyltransferase G from Staphylococcus epidermidis (strain ATCC 12228 / FDA PCI 1200).